A 202-amino-acid polypeptide reads, in one-letter code: Type II restriction enzyme MthZI (202 aa).

The catalysed reaction is Endonucleolytic cleavage of DNA to give specific double-stranded fragments with terminal 5'-phosphates.. In terms of biological role, a P subtype restriction enzyme that recognizes the double-stranded sequence 5'-CTAG-3' and cleaves after C-1. This Methanothermobacter thermautotrophicus (Methanobacterium thermoformicicum) protein is Type II restriction enzyme MthZI.